The primary structure comprises 86 residues: MKPGIHPNYRTVVFHDTSADTYFTVGSTIATARTIERDGQTYPYVTLDISSASHPYYTGKQKEFSKEGSAARFHQRYGSFLTKKAS.

The protein belongs to the bacterial ribosomal protein bL31 family. Type B subfamily. Part of the 50S ribosomal subunit.

This chain is Large ribosomal subunit protein bL31B, found in Yersinia enterocolitica serotype O:8 / biotype 1B (strain NCTC 13174 / 8081).